Consider the following 150-residue polypeptide: MKLHTLRPAKGSVKTSKRIGRGTGSGRGGTSTKGHKGAKSRSGYSSKIGFEGGQMPLQRRLPKFGFKPLNKIEFKPINLDELLELIEKTGASVIDTALMNQNGLIGKNDKVKVLARGEVKSIKAEIIAHAFSASASEAITNAGGKVTLIG.

A disordered region spans residues 1-51; it reads MKLHTLRPAKGSVKTSKRIGRGTGSGRGGTSTKGHKGAKSRSGYSSKIGFE. The segment covering 21–31 has biased composition (gly residues); the sequence is RGTGSGRGGTS.

The protein belongs to the universal ribosomal protein uL15 family. In terms of assembly, part of the 50S ribosomal subunit.

Functionally, binds to the 23S rRNA. The chain is Large ribosomal subunit protein uL15 from Cytophaga hutchinsonii (strain ATCC 33406 / DSM 1761 / CIP 103989 / NBRC 15051 / NCIMB 9469 / D465).